The chain runs to 130 residues: Small ribosomal subunit protein uS11 (130 aa).

This sequence belongs to the universal ribosomal protein uS11 family. As to quaternary structure, part of the 30S ribosomal subunit. Interacts with proteins S7 and S18. Binds to IF-3.

Its function is as follows. Located on the platform of the 30S subunit, it bridges several disparate RNA helices of the 16S rRNA. Forms part of the Shine-Dalgarno cleft in the 70S ribosome. This Prochlorococcus marinus (strain MIT 9211) protein is Small ribosomal subunit protein uS11.